Here is a 703-residue protein sequence, read N- to C-terminus: MNAHLANEVQTISATARVGPRSLVHVIISSECLAAAGIPLAALMRGRPGLGTAANFQVEIQTRAHATGDCTPWCTAFAAYVPADAVGELLAPVVPAHPGLLPRASSAGGLFVSLPVVCDAQGVYDPYAVAALRLAWGSGASCARVILFSYDELVPPNTRYAADSTRIMRVCRHLCRYVALLGAAAPPAAKEAAAHLSMGLGESASPRPQPLARPHAGAPADPPIVGASDPPISPEEQLTAPGGDTTAAQDVSIAQENEEILALVQRAVQDVTRRHPVRARTGRAACGVASGLRQGALVHQAVSGGAMGAADADAVLAGLEPPGGGRFVAPAPHGPGGEDILNDVLTLTPGTAKPRSLVEWLDRGWEALAGGDRPDWLWSRRSISVVLRHHYGTKQRFVVVSYENSVAWGGRRARPPLLSSALATALTEACAAERVVRPHQLSPAGQAELLLRFPALEVPLRHPRPVLPPFDIAAEVAFTARIHLACLRALGQAIRAALQGGPRISQRLRYDFGPDQRAWLGEVTRRFPILLENLMRAVEGTAPDAFFHTAYALAVLAHLGGRGGRGRRVVPLGDDLPARFADSDGHYVFDYYSTSGDTLRLNNRPIAVAMDGDVSKREQSKCRFMEAVPSTAPRRVCEQYLPGESYAYLCLGFNRRLCGIVVFPGGFAFTINIAAYLSLSDPVARAAVLRFCRKVSSGNGRSR.

Positions 200–246 are disordered; the sequence is LGESASPRPQPLARPHAGAPADPPIVGASDPPISPEEQLTAPGGDTT.

The protein belongs to the herpesviridae CVC1 protein family. Interacts (via C-terminus) with capsid vertex component 2/CVC2.

The protein resides in the virion. Its subcellular location is the host nucleus. Functionally, capsid vertex-specific component that plays a role during viral DNA encapsidation, assuring correct genome cleavage and presumably stabilizing capsids that contain full-length viral genomes. This is Capsid vertex component 1 from Human herpesvirus 1 (strain 17) (HHV-1).